The chain runs to 331 residues: Biotin synthase (331 aa).

The Radical SAM core domain occupies 48–278; the sequence is FDSQKFEFCS…SAELRLCGGR (231 aa). Cys-66, Cys-70, and Cys-73 together coordinate [4Fe-4S] cluster. Residues Cys-110, Cys-143, Cys-203, and Arg-273 each coordinate [2Fe-2S] cluster.

This sequence belongs to the radical SAM superfamily. Biotin synthase family. As to quaternary structure, homodimer. [4Fe-4S] cluster is required as a cofactor. Requires [2Fe-2S] cluster as cofactor.

It catalyses the reaction (4R,5S)-dethiobiotin + (sulfur carrier)-SH + 2 reduced [2Fe-2S]-[ferredoxin] + 2 S-adenosyl-L-methionine = (sulfur carrier)-H + biotin + 2 5'-deoxyadenosine + 2 L-methionine + 2 oxidized [2Fe-2S]-[ferredoxin]. It participates in cofactor biosynthesis; biotin biosynthesis; biotin from 7,8-diaminononanoate: step 2/2. Functionally, catalyzes the conversion of dethiobiotin (DTB) to biotin by the insertion of a sulfur atom into dethiobiotin via a radical-based mechanism. This Hydrogenobaculum sp. (strain Y04AAS1) protein is Biotin synthase.